Here is an 892-residue protein sequence, read N- to C-terminus: Alpha-actinin-1 (892 aa).

The residue at position 1 (Met-1) is an N-acetylmethionine. The tract at residues 1 to 247 is actin-binding; the sequence is MDHYDSQQTN…IMTYVSSFYH (247 aa). Ser-6 carries the phosphoserine modification. The residue at position 12 (Tyr-12) is a Phosphotyrosine; by FAK1. 2 Calponin-homology (CH) domains span residues 31–135 and 144–250; these read KQQR…LRFA and TSAK…HAFS. An N6-acetyllysine mark is found at Lys-95 and Lys-195. Spectrin repeat units lie at residues 274–384, 394–499, 509–620, and 630–733; these read QLME…WLLN, HLAE…ALER, QLYL…ALTE, and RLRK…EVEN. Residues 274-733 form an interaction with DDN region; that stretch reads QLMEDYEKLA…IARTINEVEN (460 aa). At Ser-471 the chain carries Phosphoserine. Lys-676 carries the N6-acetyllysine modification. Ser-677 is subject to Phosphoserine. 2 consecutive EF-hand domains span residues 746–781 and 787–822; these read EQMNEFRASFNHFDRDHSGTLGPEEFKACLISLGYD and QGEAEFARIMSIVDPNRLGVVTFQAFIDFMSRETAD. Residues Asp-759, Asp-761, Ser-763, Thr-765, and Glu-770 each coordinate Ca(2+). Position 890 is a phosphoserine (Ser-890).

This sequence belongs to the alpha-actinin family. As to quaternary structure, homodimer; antiparallel. Interacts with MYOZ2, TTID and LPP. Interacts with DDN. Interacts with PSD. Interacts with MICALL2. Interacts with DNM2 and CTTN. Interacts with PDLIM1. Interacts with PDLIM2. Interacts with PDLIM4 (via PDZ domain). Interacts with IGSF8.

It is found in the cytoplasm. The protein localises to the cytoskeleton. Its subcellular location is the myofibril. The protein resides in the sarcomere. It localises to the z line. It is found in the cell membrane. The protein localises to the cell junction. Its subcellular location is the cell projection. The protein resides in the ruffle. F-actin cross-linking protein which is thought to anchor actin to a variety of intracellular structures. Association with IGSF8 regulates the immune synapse formation and is required for efficient T-cell activation. This Bos taurus (Bovine) protein is Alpha-actinin-1 (ACTN1).